The primary structure comprises 125 residues: MRHYEIVFIVHPDQSEQVSAMIERYRNIVTARNGQVHRLEDWGRRQLAYLIQKVHKAHYVLMNIECDQETLDELEHAFKFNDAILRHLTLKMDEPVTAPSPMMREEKAKSAPQPAEEAKETTLAT.

The tract at residues 96 to 125 (VTAPSPMMREEKAKSAPQPAEEAKETTLAT) is disordered. Over residues 116-125 (EEAKETTLAT) the composition is skewed to basic and acidic residues.

Belongs to the bacterial ribosomal protein bS6 family.

In terms of biological role, binds together with bS18 to 16S ribosomal RNA. This is Small ribosomal subunit protein bS6 from Nitrosospira multiformis (strain ATCC 25196 / NCIMB 11849 / C 71).